Reading from the N-terminus, the 138-residue chain is Thyrotropin subunit beta (138 aa).

Positions 1 to 20 (MTAIFLMSMLFGLACGQAMS) are cleaved as a signal peptide. 6 cysteine pairs are disulfide-bonded: C22-C72, C36-C87, C39-C125, C47-C103, C51-C105, and C108-C115. An N-linked (GlcNAc...) asparagine glycan is attached at N43. A propeptide spanning residues 133–138 (VLEFSI) is cleaved from the precursor.

Belongs to the glycoprotein hormones subunit beta family. As to quaternary structure, heterodimer of a common alpha chain and a unique beta chain which confers biological specificity to thyrotropin, lutropin, follitropin and gonadotropin.

The protein localises to the secreted. In terms of biological role, indispensable for the control of thyroid structure and metabolism. This is Thyrotropin subunit beta (TSHB) from Sus scrofa (Pig).